A 309-amino-acid polypeptide reads, in one-letter code: Serine/threonine-protein phosphatase PP2A catalytic subunit (309 aa).

Mn(2+) contacts are provided by aspartate 57, histidine 59, aspartate 85, and asparagine 117. Catalysis depends on histidine 118, which acts as the Proton donor. The Mn(2+) site is built by histidine 167 and histidine 241.

The protein belongs to the PPP phosphatase family. PP-2A subfamily. Mn(2+) serves as cofactor.

The enzyme catalyses O-phospho-L-seryl-[protein] + H2O = L-seryl-[protein] + phosphate. It catalyses the reaction O-phospho-L-threonyl-[protein] + H2O = L-threonyl-[protein] + phosphate. This Brassica napus (Rape) protein is Serine/threonine-protein phosphatase PP2A catalytic subunit.